The following is a 113-amino-acid chain: Large ribosomal subunit protein uL22 (113 aa).

The protein belongs to the universal ribosomal protein uL22 family. Part of the 50S ribosomal subunit.

In terms of biological role, this protein binds specifically to 23S rRNA; its binding is stimulated by other ribosomal proteins, e.g. L4, L17, and L20. It is important during the early stages of 50S assembly. It makes multiple contacts with different domains of the 23S rRNA in the assembled 50S subunit and ribosome. Functionally, the globular domain of the protein is located near the polypeptide exit tunnel on the outside of the subunit, while an extended beta-hairpin is found that lines the wall of the exit tunnel in the center of the 70S ribosome. The polypeptide is Large ribosomal subunit protein uL22 (Herpetosiphon aurantiacus (strain ATCC 23779 / DSM 785 / 114-95)).